We begin with the raw amino-acid sequence, 281 residues long: Probable feruloyl esterase A (281 aa).

The signal sequence occupies residues 1–21 (MKNFFSMHAILLACSAGAGLA). 3 disulfides stabilise this stretch: cysteine 50/cysteine 279, cysteine 112/cysteine 115, and cysteine 248/cysteine 255. Aspartate 98 contacts substrate. A glycan (N-linked (GlcNAc...) asparagine) is linked at asparagine 100. A substrate-binding site is contributed by tyrosine 101. Catalysis depends on serine 154, which acts as the Nucleophile. N-linked (GlcNAc...) asparagine glycosylation is present at asparagine 173. Aspartate 215 functions as the Charge relay system in the catalytic mechanism. Histidine 268 provides a ligand contact to substrate. Histidine 268 functions as the Charge relay system in the catalytic mechanism.

The protein belongs to the AB hydrolase superfamily. FaeA family.

Its subcellular location is the secreted. It carries out the reaction feruloyl-polysaccharide + H2O = ferulate + polysaccharide.. Its function is as follows. Involved in degradation of plant cell walls. Hydrolyzes the feruloyl-arabinose ester bond in arabinoxylans, and the feruloyl-galactose ester bond in pectin. This is Probable feruloyl esterase A (faeA) from Aspergillus oryzae (strain ATCC 42149 / RIB 40) (Yellow koji mold).